Consider the following 801-residue polypeptide: Phenylalanine--tRNA ligase beta subunit (801 aa).

Positions 39–153 (AEGLSKLVVG…EEAVPGDAIF (115 aa)) constitute a tRNA-binding domain. The 76-residue stretch at 406-481 (TEPVEVSTSL…RIYGYDKLPT (76 aa)) folds into the B5 domain. Mg(2+) contacts are provided by Asp-459, Asp-465, Glu-468, and Glu-469. Residues 708–801 (TKFPAMTRDI…LTEQVGAEVR (94 aa)) enclose the FDX-ACB domain.

This sequence belongs to the phenylalanyl-tRNA synthetase beta subunit family. Type 1 subfamily. As to quaternary structure, tetramer of two alpha and two beta subunits. Mg(2+) serves as cofactor.

The protein resides in the cytoplasm. The catalysed reaction is tRNA(Phe) + L-phenylalanine + ATP = L-phenylalanyl-tRNA(Phe) + AMP + diphosphate + H(+). The sequence is that of Phenylalanine--tRNA ligase beta subunit from Streptococcus pyogenes serotype M18 (strain MGAS8232).